The primary structure comprises 148 residues: Large ribosomal subunit protein bL9 (148 aa).

This sequence belongs to the bacterial ribosomal protein bL9 family.

Binds to the 23S rRNA. The polypeptide is Large ribosomal subunit protein bL9 (Streptomyces griseus subsp. griseus (strain JCM 4626 / CBS 651.72 / NBRC 13350 / KCC S-0626 / ISP 5235)).